A 217-amino-acid polypeptide reads, in one-letter code: 3,4-dihydroxy-2-butanone 4-phosphate synthase (217 aa).

Residues 37–38 (RE), Asp42, 150–154 (RRGHT), and Glu174 each bind D-ribulose 5-phosphate. Mg(2+) is bound at residue Glu38. His153 contributes to the Mg(2+) binding site.

It belongs to the DHBP synthase family. Homodimer. Mg(2+) is required as a cofactor. It depends on Mn(2+) as a cofactor.

The catalysed reaction is D-ribulose 5-phosphate = (2S)-2-hydroxy-3-oxobutyl phosphate + formate + H(+). The protein operates within cofactor biosynthesis; riboflavin biosynthesis; 2-hydroxy-3-oxobutyl phosphate from D-ribulose 5-phosphate: step 1/1. Its function is as follows. Catalyzes the conversion of D-ribulose 5-phosphate to formate and 3,4-dihydroxy-2-butanone 4-phosphate. This is 3,4-dihydroxy-2-butanone 4-phosphate synthase from Shewanella sp. (strain W3-18-1).